The primary structure comprises 212 residues: Methylthioribulose-1-phosphate dehydratase (212 aa).

Zn(2+) is bound by residues H97 and H99.

It belongs to the aldolase class II family. MtnB subfamily. As to quaternary structure, homotetramer. Zn(2+) is required as a cofactor.

The catalysed reaction is 5-(methylsulfanyl)-D-ribulose 1-phosphate = 5-methylsulfanyl-2,3-dioxopentyl phosphate + H2O. It functions in the pathway amino-acid biosynthesis; L-methionine biosynthesis via salvage pathway; L-methionine from S-methyl-5-thio-alpha-D-ribose 1-phosphate: step 2/6. Its function is as follows. Catalyzes the dehydration of methylthioribulose-1-phosphate (MTRu-1-P) into 2,3-diketo-5-methylthiopentyl-1-phosphate (DK-MTP-1-P). This Bacillus cereus (strain ATCC 10987 / NRS 248) protein is Methylthioribulose-1-phosphate dehydratase.